Consider the following 524-residue polypeptide: 2,3-bisphosphoglycerate-independent phosphoglycerate mutase (524 aa).

Residues Asp-13 and Ser-63 each contribute to the Mn(2+) site. The Phosphoserine intermediate role is filled by Ser-63. Residues His-124, 154–155, Arg-186, Arg-192, 262–265, and Lys-337 each bind substrate; these read RD and RADR. Residues Asp-404, His-408, Asp-445, His-446, and His-464 each coordinate Mn(2+).

Belongs to the BPG-independent phosphoglycerate mutase family. Monomer. It depends on Mn(2+) as a cofactor.

It catalyses the reaction (2R)-2-phosphoglycerate = (2R)-3-phosphoglycerate. It functions in the pathway carbohydrate degradation; glycolysis; pyruvate from D-glyceraldehyde 3-phosphate: step 3/5. Functionally, catalyzes the interconversion of 2-phosphoglycerate and 3-phosphoglycerate. In Thermomicrobium roseum (strain ATCC 27502 / DSM 5159 / P-2), this protein is 2,3-bisphosphoglycerate-independent phosphoglycerate mutase.